We begin with the raw amino-acid sequence, 443 residues long: Tol-Pal system protein TolB (443 aa).

A signal peptide spans 1-33; it reads MKIGIINTKIRTVFSAFACMIAASLVCTMPARA.

The protein belongs to the TolB family. The Tol-Pal system is composed of five core proteins: the inner membrane proteins TolA, TolQ and TolR, the periplasmic protein TolB and the outer membrane protein Pal. They form a network linking the inner and outer membranes and the peptidoglycan layer.

It localises to the periplasm. In terms of biological role, part of the Tol-Pal system, which plays a role in outer membrane invagination during cell division and is important for maintaining outer membrane integrity. The protein is Tol-Pal system protein TolB of Brucella canis (strain ATCC 23365 / NCTC 10854 / RM-666).